We begin with the raw amino-acid sequence, 338 residues long: D-erythrose-4-phosphate dehydrogenase (338 aa).

Arginine 12–isoleucine 13 is an NAD(+) binding site. Substrate contacts are provided by residues serine 154–threonine 156, arginine 200, threonine 213–lysine 214, and arginine 236. The Nucleophile role is filled by cysteine 155. Asparagine 318 contributes to the NAD(+) binding site.

The protein belongs to the glyceraldehyde-3-phosphate dehydrogenase family. Epd subfamily. In terms of assembly, homotetramer.

It is found in the cytoplasm. It carries out the reaction D-erythrose 4-phosphate + NAD(+) + H2O = 4-phospho-D-erythronate + NADH + 2 H(+). Its pathway is cofactor biosynthesis; pyridoxine 5'-phosphate biosynthesis; pyridoxine 5'-phosphate from D-erythrose 4-phosphate: step 1/5. Its function is as follows. Catalyzes the NAD-dependent conversion of D-erythrose 4-phosphate to 4-phosphoerythronate. This chain is D-erythrose-4-phosphate dehydrogenase, found in Pectobacterium atrosepticum (strain SCRI 1043 / ATCC BAA-672) (Erwinia carotovora subsp. atroseptica).